The primary structure comprises 124 residues: Small ribosomal subunit protein uS12 (124 aa).

Aspartate 89 carries the 3-methylthioaspartic acid modification.

Belongs to the universal ribosomal protein uS12 family. As to quaternary structure, part of the 30S ribosomal subunit. Contacts proteins S8 and S17. May interact with IF1 in the 30S initiation complex.

With S4 and S5 plays an important role in translational accuracy. Functionally, interacts with and stabilizes bases of the 16S rRNA that are involved in tRNA selection in the A site and with the mRNA backbone. Located at the interface of the 30S and 50S subunits, it traverses the body of the 30S subunit contacting proteins on the other side and probably holding the rRNA structure together. The combined cluster of proteins S8, S12 and S17 appears to hold together the shoulder and platform of the 30S subunit. The chain is Small ribosomal subunit protein uS12 from Proteus mirabilis (strain HI4320).